Consider the following 243-residue polypeptide: Transcription factor TFIIS homolog (243 aa).

Residues 77 to 201 (MRDIIQMMFF…SQQKVAEKTS (125 aa)) enclose the TFIIS central domain. A TFIIS-type zinc finger spans residues 202 to 242 (QLYKCPNCKQRMCTYREVQTRALDEPSTIYCTCKKCGHEFI). Residues Cys-206, Cys-209, Cys-234, and Cys-237 each contribute to the Zn(2+) site.

Belongs to the TFS-II family.

Its function is as follows. Putative initiation factor. Necessary for efficient transcription elongation past template-encoded arresting sites. The polypeptide is Transcription factor TFIIS homolog (African swine fever virus (isolate Pig/Kenya/KEN-50/1950) (ASFV)).